A 435-amino-acid chain; its full sequence is E3 ubiquitin-protein ligase PUB22 (435 aa).

Residues 6–81 (EIPSFFLCPI…QSWCTLNASY (76 aa)) form the U-box domain.

Interacts with RPN12A. Binds to EXO70B2. Auto-ubiquitinated leading to degradation via the 26S proteasome. This Auto-ubiquitination is repressed by the bacterial elicitor flg22 thus leading to a transiently increased protein stabilization and accumulation.

It is found in the cytoplasm. It carries out the reaction S-ubiquitinyl-[E2 ubiquitin-conjugating enzyme]-L-cysteine + [acceptor protein]-L-lysine = [E2 ubiquitin-conjugating enzyme]-L-cysteine + N(6)-ubiquitinyl-[acceptor protein]-L-lysine.. It functions in the pathway protein modification; protein ubiquitination. E3 ubiquitin-protein ligase that negatively regulates water stress response. May control in coordination with PUB23 a drought signaling pathway by ubiquitinating cytosolic RPN12a. Acts as a negative regulator of the immunity triggered by the pathogen-associated molecular patterns (PAMPs), in association with PUB23 and PUB24. Regulates EXO70B2 ubiquitination and degradation via the 26S proteasome to attenuate PAMP-induced signaling. The chain is E3 ubiquitin-protein ligase PUB22 from Arabidopsis thaliana (Mouse-ear cress).